Here is a 355-residue protein sequence, read N- to C-terminus: MAITKYKAAAVTSEPGWFDLEGGVRKTIDFINEAGQAGCKFVAFPEVWIPGYPYWMWKVTYLQSLPMLKRYRENSMAVDSEEMRRIRRAARDNQIFVSLGFSEIDHATLYLSQVLIGPDGAVINHRRKIKPTHVEKLVYGDGAGDTFMSVSETEIGRVGQLNCWENMNPFLKSLNVSAGEQVHVAAWPVYPGKERQVYPDPATNYADPASDLVTPEYAIETGTWTLAPFQRLSVEGLKINTPEGVEPETDPSVYNGHARIYRPDGSLVVKPEKDFDGLLFVDIDLNECHLTKVLADFAGHYMRPDLIRLLVDTRRKELITEADPNGSIATYSTRQRLGLDKPLEKKEGEDTPDVL.

The region spanning 6-285 (YKAAAVTSEP…DGLLFVDIDL (280 aa)) is the CN hydrolase domain. Glutamate 46 serves as the catalytic Proton acceptor. Lysine 128 is an active-site residue. Cysteine 163 serves as the catalytic Nucleophile.

This sequence belongs to the carbon-nitrogen hydrolase superfamily. Nitrilase family. In terms of assembly, oligomer of dimers, forming left-handed helical fibers.

The catalysed reaction is formamide = hydrogen cyanide + H2O. Its function is as follows. Catalyzes the hydration of cyanide to formamide. Degradation of cyanide may be important for plant pathogenic fungi in infection of cyanogenic plants. The polypeptide is Cyanide hydratase (Gibberella zeae (strain ATCC MYA-4620 / CBS 123657 / FGSC 9075 / NRRL 31084 / PH-1) (Wheat head blight fungus)).